Reading from the N-terminus, the 81-residue chain is Neuronatin (81 aa).

It belongs to the neuronatin family.

In terms of biological role, may participate in the maintenance of segment identity in the hindbrain and pituitary development, and maturation or maintenance of the overall structure of the nervous system. May function as a regulatory subunit of ion channels. This is Neuronatin (NNAT) from Homo sapiens (Human).